Here is a 285-residue protein sequence, read N- to C-terminus: MVKDTTHSILEISTIHGKSSVTGSKIFRPLKIFALEKNKACHLVFSNYGGGFVEGDSIDLTIDCKADTVSAFSSQANTRIYRSEHGKTCKQTITGTVGENALVVFMGDPVVPHQKSIFEQHLFWKLEKNAVLLVIDWFEAGRILNGERFAFDSFFTELKIESNGVPIVWDRFKMDPSQNNMNSPGAFLDHSSYINIFLAGDENLTRVKSIETQLRFLAAQYFHEHIENKSESLIRIGSAVKVNEQVFMIRCSAKNNDLLQPFVKALAEHMSDKELLGFNPFEGRN.

It belongs to the UreD family. As to quaternary structure, ureD, UreF and UreG form a complex that acts as a GTP-hydrolysis-dependent molecular chaperone, activating the urease apoprotein by helping to assemble the nickel containing metallocenter of UreC. The UreE protein probably delivers the nickel.

The protein resides in the cytoplasm. In terms of biological role, required for maturation of urease via the functional incorporation of the urease nickel metallocenter. In Cytophaga hutchinsonii (strain ATCC 33406 / DSM 1761 / CIP 103989 / NBRC 15051 / NCIMB 9469 / D465), this protein is Urease accessory protein UreD.